The primary structure comprises 485 residues: Cysteine--tRNA ligase (485 aa).

Cysteine 27 contributes to the Zn(2+) binding site. The 'HIGH' region motif lies at 29–39; that stretch reads ITAYDLCHIGH. Residues cysteine 208, histidine 233, and glutamate 237 each contribute to the Zn(2+) site. Residues 265 to 269 carry the 'KMSKS' region motif; it reads KMSKS. Residue lysine 268 participates in ATP binding.

Belongs to the class-I aminoacyl-tRNA synthetase family. In terms of assembly, monomer. Requires Zn(2+) as cofactor.

It is found in the cytoplasm. It catalyses the reaction tRNA(Cys) + L-cysteine + ATP = L-cysteinyl-tRNA(Cys) + AMP + diphosphate. The polypeptide is Cysteine--tRNA ligase (Maridesulfovibrio salexigens (strain ATCC 14822 / DSM 2638 / NCIMB 8403 / VKM B-1763) (Desulfovibrio salexigens)).